The sequence spans 65 residues: Conotoxin Lp5.1 (65 aa).

A signal peptide spans 1-22 (MRCVPVFIILLLLIPSAPSVDA). Residues 23-50 (QRKTKDDVPLASFHDNAKRTLKRLWNKR) constitute a propeptide that is removed on maturation.

It belongs to the conotoxin T superfamily. In terms of processing, contains 2 disulfide bonds that can be either 'C1-C3, C2-C4' or 'C1-C4, C2-C3', since these disulfide connectivities have been observed for conotoxins with cysteine framework V (for examples, see AC P0DQQ7 and AC P81755). In terms of tissue distribution, expressed by the venom duct.

The protein localises to the secreted. In Conus leopardus (Leopard cone), this protein is Conotoxin Lp5.1.